The sequence spans 87 residues: U3-theraphotoxin-Hhn1o (87 aa).

A signal peptide spans 1-24 (MVNMKASMFLTFAGLVLLFVVCYA). Positions 25 to 52 (SESEEKEFPKEMLSSIFAVDNDFKQEER) are excised as a propeptide. Cystine bridges form between Cys54-Cys67 and Cys61-Cys72.

This sequence belongs to the neurotoxin 10 (Hwtx-1) family. 51 (Hntx-8) subfamily. Hntx-8 sub-subfamily. In terms of tissue distribution, expressed by the venom gland.

The protein localises to the secreted. Ion channel inhibitor. This chain is U3-theraphotoxin-Hhn1o, found in Cyriopagopus hainanus (Chinese bird spider).